A 90-amino-acid polypeptide reads, in one-letter code: Small ribosomal subunit protein uS19 (90 aa).

Belongs to the universal ribosomal protein uS19 family.

Protein S19 forms a complex with S13 that binds strongly to the 16S ribosomal RNA. The chain is Small ribosomal subunit protein uS19 from Nitrosococcus oceani (strain ATCC 19707 / BCRC 17464 / JCM 30415 / NCIMB 11848 / C-107).